A 20-amino-acid chain; its full sequence is Cruzioseptin-15 (20 aa).

As to expression, expressed by the skin glands.

It localises to the secreted. Functionally, has antimicrobial activity. This chain is Cruzioseptin-15, found in Cruziohyla calcarifer (Splendid leaf frog).